Reading from the N-terminus, the 338-residue chain is Penicillin V acylase (338 aa).

Residues 1–3 (MLG) constitute a propeptide, removed in mature form. Cysteine 4 functions as the Nucleophile in the catalytic mechanism.

It belongs to the peptidase C59 family. As to quaternary structure, homotetramer. Post-translationally, expressed as an inactive precursor that is cleaved autocatalytically at Gly-3/Cys-4 to generate an active enzyme. Processing exposes a catalytic N-terminal nucleophile residue with a free alpha amino group.

The catalysed reaction is a penicillin + H2O = 6-aminopenicillanate + a carboxylate. With respect to regulation, hydrolase activity is rapidly inhibited by lysine modifying reagents. In terms of biological role, catalyzes the hydrolysis of penicillin V to 6-aminopenicillanate (6-APA). Exhibits high specificity for penicillin V. Penicillin G and other related compounds are hydrolyzed at less than 10% of the rate of penicillin V. Among the cephalosporins, cephalosporin C is resistant to cleavage, whereas cephalosporin G is cleaved at about 1% of the rate of cleavage of penicillin V. The polypeptide is Penicillin V acylase (Lysinibacillus sphaericus (Bacillus sphaericus)).